Consider the following 70-residue polypeptide: DNA-directed RNA polymerase subunit omega (70 aa).

The protein belongs to the RNA polymerase subunit omega family. As to quaternary structure, the RNAP catalytic core consists of 2 alpha, 1 beta, 1 beta' and 1 omega subunit. When a sigma factor is associated with the core the holoenzyme is formed, which can initiate transcription.

It catalyses the reaction RNA(n) + a ribonucleoside 5'-triphosphate = RNA(n+1) + diphosphate. In terms of biological role, promotes RNA polymerase assembly. Latches the N- and C-terminal regions of the beta' subunit thereby facilitating its interaction with the beta and alpha subunits. This chain is DNA-directed RNA polymerase subunit omega, found in Marinobacter nauticus (strain ATCC 700491 / DSM 11845 / VT8) (Marinobacter aquaeolei).